The chain runs to 241 residues: 2-C-methyl-D-erythritol 4-phosphate cytidylyltransferase (241 aa).

It belongs to the IspD/TarI cytidylyltransferase family. IspD subfamily. Homodimer.

The catalysed reaction is 2-C-methyl-D-erythritol 4-phosphate + CTP + H(+) = 4-CDP-2-C-methyl-D-erythritol + diphosphate. Its pathway is isoprenoid biosynthesis; isopentenyl diphosphate biosynthesis via DXP pathway; isopentenyl diphosphate from 1-deoxy-D-xylulose 5-phosphate: step 2/6. Catalyzes the formation of 4-diphosphocytidyl-2-C-methyl-D-erythritol from CTP and 2-C-methyl-D-erythritol 4-phosphate (MEP). In Yersinia pestis, this protein is 2-C-methyl-D-erythritol 4-phosphate cytidylyltransferase.